The sequence spans 183 residues: Ribonuclease M5 (183 aa).

Residues lysine 6–lysine 90 enclose the Toprim domain. Positions 12, 59, and 61 each coordinate Mg(2+).

This sequence belongs to the ribonuclease M5 family. Mg(2+) is required as a cofactor.

Its subcellular location is the cytoplasm. It carries out the reaction Endonucleolytic cleavage of RNA, removing 21 and 42 nucleotides, respectively, from the 5'- and 3'-termini of a 5S-rRNA precursor.. Functionally, required for correct processing of both the 5' and 3' ends of 5S rRNA precursor. Cleaves both sides of a double-stranded region yielding mature 5S rRNA in one step. This Fusobacterium nucleatum subsp. nucleatum (strain ATCC 25586 / DSM 15643 / BCRC 10681 / CIP 101130 / JCM 8532 / KCTC 2640 / LMG 13131 / VPI 4355) protein is Ribonuclease M5.